Consider the following 133-residue polypeptide: MTLNLCVLTPNRIIWDSEVKEIILPTNSGQIGVLPNHAPIATAVDIGILRIRLDDQWVTMALMGGFARIGNNEITILVNDAERGSDIDLQEAQGTLEIAEANLNKAEGKRQVIEANLALRRARTRVEAVNTIS.

Belongs to the ATPase epsilon chain family. In terms of assembly, F-type ATPases have 2 components, CF(1) - the catalytic core - and CF(0) - the membrane proton channel. CF(1) has five subunits: alpha(3), beta(3), gamma(1), delta(1), epsilon(1). CF(0) has three main subunits: a, b and c.

The protein localises to the plastid. Its subcellular location is the chloroplast thylakoid membrane. In terms of biological role, produces ATP from ADP in the presence of a proton gradient across the membrane. The chain is ATP synthase epsilon chain, chloroplastic from Piper cenocladum (Ant piper).